A 247-amino-acid chain; its full sequence is Adenosylcobinamide-GDP ribazoletransferase (247 aa).

5 helical membrane passes run 34–54 (IVMF…IFIL), 59–79 (CGIP…TGGF), 113–133 (GGLA…ELAL), 138–158 (VLAA…LLMY), and 194–214 (VLLP…AIFI).

Belongs to the CobS family. Requires Mg(2+) as cofactor.

It is found in the cell inner membrane. It catalyses the reaction alpha-ribazole + adenosylcob(III)inamide-GDP = adenosylcob(III)alamin + GMP + H(+). The catalysed reaction is alpha-ribazole 5'-phosphate + adenosylcob(III)inamide-GDP = adenosylcob(III)alamin 5'-phosphate + GMP + H(+). The protein operates within cofactor biosynthesis; adenosylcobalamin biosynthesis; adenosylcobalamin from cob(II)yrinate a,c-diamide: step 7/7. Its function is as follows. Joins adenosylcobinamide-GDP and alpha-ribazole to generate adenosylcobalamin (Ado-cobalamin). Also synthesizes adenosylcobalamin 5'-phosphate from adenosylcobinamide-GDP and alpha-ribazole 5'-phosphate. The sequence is that of Adenosylcobinamide-GDP ribazoletransferase from Salmonella arizonae (strain ATCC BAA-731 / CDC346-86 / RSK2980).